Here is a 554-residue protein sequence, read N- to C-terminus: MFS-type transporter tstD (554 aa).

2 stretches are compositionally biased toward polar residues: residues 1 to 10 and 27 to 38; these read MPEPFNSTMP and QDSNQPPEMSAS. The tract at residues 1–68 is disordered; sequence MPEPFNSTMP…ESENNEPYSV (68 aa). N6 is a glycosylation site (N-linked (GlcNAc...) asparagine). Over residues 39 to 48 the composition is skewed to basic and acidic residues; it reads SEKKHPENEN. The helical transmembrane segment at 76–96 threads the bilayer; that stretch reads LMVLAASLAGFFSPLSASIYY. N-linked (GlcNAc...) asparagine glycans are attached at residues N107 and N114. The next 5 membrane-spanning stretches (helical) occupy residues 115-135, 142-162, 173-193, 202-222, and 231-251; these read LTVT…ASFS, PGYA…ALQN, LQSA…SDII, IAFA…IGGL, and WIFW…FLFF. Residues 281–300 form a disordered region; it reads KEKQRQQRAENEEENANRQR. 3 consecutive transmembrane segments (helical) span residues 311–331, 354–374, and 413–433; these read VFVV…GVAF, IKVA…ALST, and IALP…WLMT. N-linked (GlcNAc...) asparagine glycosylation is present at N437. Helical transmembrane passes span 442–462, 473–493, and 504–524; these read IILL…LNVL, MVTA…AAMI, and WSYT…LLTM.

Belongs to the major facilitator superfamily.

It is found in the membrane. MFS-type transporter; part of the gene cluster that mediates the biosynthesis of the antihypercholesterolemic agents phomoidrides which are dimeric anhydrides. The sequence is that of MFS-type transporter tstD from Talaromyces stipitatus (strain ATCC 10500 / CBS 375.48 / QM 6759 / NRRL 1006) (Penicillium stipitatum).